A 381-amino-acid polypeptide reads, in one-letter code: tRNA pseudouridine synthase D (381 aa).

Catalysis depends on D81, which acts as the Nucleophile. In terms of domain architecture, TRUD spans G160–V335.

This sequence belongs to the pseudouridine synthase TruD family.

It catalyses the reaction uridine(13) in tRNA = pseudouridine(13) in tRNA. Its function is as follows. Responsible for synthesis of pseudouridine from uracil-13 in transfer RNAs. This is tRNA pseudouridine synthase D from Helicobacter pylori (strain HPAG1).